Reading from the N-terminus, the 470-residue chain is MTMSENSRNLEAGLLLRKNQNDINECRITAVVLFSTFVSVCGSFCFGCAAGYSSVAQTGIINDLGLSVAQYSMFGSIMTFGGMIGAIFSGKVADLMGRKGTMWFAQIFCIFGWVAVALAKDSMWLDIGRLSTGFAVGLLSYVIPVYIAEITPKHVRGAFVFANQLMQSCGLSLFYVIGNFVHWRNLALIGLIPCALQVVTLFFIPESPRLLGKWGHEKECRASLQSLRGDDADISEEANTIKETMILFDEGPKSRVMDLFQRRYAPSVVIGVGLMLLQQLSGSSGLMYYVGSVFDKGGFPSSIGSMILAVIMIPKALLGLILVEKMGRRPLLLASTGGMCFFSLLLSFSFCFRSYGMLDELTPIFTCIGVVGFISSFAVGMGGLPWIIMSEIFPMNVKVSAGTLVTLANWSFGWIVAFAYNFMLEWNASGTFLIFFTICGAGIVFIYAMVPETKGRTLEDIQASLTDFLQ.

Positions leucine 10–leucine 16 match the Essential for the localization to the vacuole membrane motif. 12 consecutive transmembrane segments (helical) span residues isoleucine 28–cysteine 48, valine 68–phenylalanine 88, lysine 99–alanine 119, leucine 130–isoleucine 150, glycine 157–isoleucine 177, leucine 186–glutamate 206, valine 268–tyrosine 288, isoleucine 303–valine 323, leucine 332–phenylalanine 352, isoleucine 368–isoleucine 388, leucine 404–leucine 424, and glycine 430–valine 450.

It belongs to the major facilitator superfamily. Sugar transporter (TC 2.A.1.1) family. Expressed in both shoots and roots. In roots, strongly expressed in pericycle and xylem parenchyma cells, and to a lesser extent in the root endodermis. In flowers, expressed in sepals.

It is found in the vacuole membrane. The protein resides in the vesicle. Its function is as follows. Sugar transporter. Transports monosaccharides across the vacuolar membrane independently from a proton gradient. May function coordinately with the vacuolar invertase to regulate osmotic pressure by affecting the accumulation of sugar in the cells under abiotic stress conditions. This Arabidopsis thaliana (Mouse-ear cress) protein is Sugar transporter ESL1.